Consider the following 149-residue polypeptide: MRRLKMEENKIFFDSNILIYHLCGKVEAKKLIEKVENKEICGFINPIVISEVLFFYIRATTNKRHYDIKKHPEILKSLDLDIVFELFSIFQILDLNSEIVKISREIIKKYCLLPNDALICSTCKFYKINKICSFDDDFKRVDFLEIIEI.

Positions 11–149 (IFFDSNILIY…RVDFLEIIEI (139 aa)) constitute a PINc domain. Mg(2+) is bound by residues Asp-14 and Asp-116.

It belongs to the PINc/VapC protein family. Mg(2+) serves as cofactor.

Functionally, toxic component of a type II toxin-antitoxin (TA) system. An RNase. Its cognate antitoxin is VapB2. This chain is Ribonuclease VapC2, found in Methanocaldococcus jannaschii (strain ATCC 43067 / DSM 2661 / JAL-1 / JCM 10045 / NBRC 100440) (Methanococcus jannaschii).